Here is a 147-residue protein sequence, read N- to C-terminus: MTEADIAVKSSPRDYKKLTRLYCMNGGFHLQILADGTVAGAADENTYSILRIKATSPGVVVIEGSETGLYLSMNEHGKLYASSLVTDESYFLEKMEENHYNTYQSQKYGENWYVGIKKNGKMKRGPRTHIGQKAIFFLPRQVEQEED.

Asn-25 provides a ligand contact to heparin. The heparin-binding stretch occupies residues 117–133 (KKNGKMKRGPRTHIGQK).

It belongs to the heparin-binding growth factors family.

The protein localises to the secreted. The protein resides in the cytoplasm. It localises to the cell cortex. It is found in the cytosol. Its subcellular location is the nucleus. Functionally, plays an important role in the regulation of cell survival, cell division, angiogenesis, cell differentiation and cell migration. Functions as a potent mitogen in vitro. Acts as a ligand for FGFR1 and integrins. Binds to FGFR1 in the presence of heparin leading to FGFR1 dimerization and activation via sequential autophosphorylation on tyrosine residues which act as docking sites for interacting proteins, leading to the activation of several signaling cascades. Binds to integrins. Its binding to integrins and subsequent ternary complex formation with integrins and FGFR1 are essential for FGF1 signaling. The polypeptide is Putative fibroblast growth factor 1 (fgf1) (Danio rerio (Zebrafish)).